The chain runs to 314 residues: Olfactory receptor 5G29 (314 aa).

Residues 1–25 (MEEKNQTIVMEFFFLGLTDHLYQKI) lie on the Extracellular side of the membrane. N-linked (GlcNAc...) asparagine glycosylation occurs at N5. The helical transmembrane segment at 26–46 (ALFITILFVYLVTLGGNLGMI) threads the bilayer. Residues 47–54 (TLIWADPR) are Cytoplasmic-facing. A helical membrane pass occupies residues 55 to 75 (LHTPMYFFLSHLSFVDMCSSS). The Extracellular segment spans residues 76–99 (SIAPKMLCDIFAEEKRISFMGCAA). Cysteines 97 and 189 form a disulfide. A helical membrane pass occupies residues 100–120 (QMWFFGFFVGTECFLLASMAY). At 121–133 (DRYTAICKPLLYT) the chain is on the cytoplasmic side. Residues 134 to 154 (LLMSQRVCVHLVVGPYVFAII) form a helical membrane-spanning segment. Residues 155-196 (NITTHTTLAFCLPFCGSNTINHFFCDVSPLLSLACADSWVNK) lie on the Extracellular side of the membrane. Residues 197–217 (VVLFVLSGAIGVFSGLIIIVS) traverse the membrane as a helical segment. The Cytoplasmic portion of the chain corresponds to 218-237 (YVSILMTIFKIQTADGKQKA). Residues 238-258 (FSTCSSHLSAVSILYGTLFFI) traverse the membrane as a helical segment. Over 259 to 271 (YVRPSASFSLNIN) the chain is Extracellular. Residues 272–292 (KMISLFYTVVIPMLNPLIYSL) form a helical membrane-spanning segment. Residues 293-312 (RNKEVKGAFRRKVQKKHFPA) are Cytoplasmic-facing.

The protein belongs to the G-protein coupled receptor 1 family.

It localises to the cell membrane. Functionally, potential odorant receptor. The chain is Olfactory receptor 5G29 from Mus musculus (Mouse).